A 203-amino-acid chain; its full sequence is Putative archaetidylserine decarboxylase proenzyme (203 aa).

Serine 171 functions as the Schiff-base intermediate with substrate; via pyruvic acid in the catalytic mechanism. Pyruvic acid (Ser); by autocatalysis is present on serine 171.

It belongs to the phosphatidylserine decarboxylase family. PSD-A subfamily. In terms of assembly, heterodimer of a large membrane-associated beta subunit and a small pyruvoyl-containing alpha subunit. Pyruvate is required as a cofactor. In terms of processing, is synthesized initially as an inactive proenzyme. Formation of the active enzyme involves a self-maturation process in which the active site pyruvoyl group is generated from an internal serine residue via an autocatalytic post-translational modification. Two non-identical subunits are generated from the proenzyme in this reaction, and the pyruvate is formed at the N-terminus of the alpha chain, which is derived from the carboxyl end of the proenzyme. The post-translation cleavage follows an unusual pathway, termed non-hydrolytic serinolysis, in which the side chain hydroxyl group of the serine supplies its oxygen atom to form the C-terminus of the beta chain, while the remainder of the serine residue undergoes an oxidative deamination to produce ammonia and the pyruvoyl prosthetic group on the alpha chain.

It is found in the cell membrane. It catalyses the reaction archaetidylserine + H(+) = archaetidylethanolamine + CO2. Catalyzes the formation of archaetidylethanolamine (PtdEtn) from archaetidylserine (PtdSer). The polypeptide is Putative archaetidylserine decarboxylase proenzyme (Methanosarcina barkeri (strain Fusaro / DSM 804)).